Consider the following 72-residue polypeptide: Lantibiotic Flvbeta.g (72 aa).

A propeptide spans 1–34 (MNNNNFDMEKFKKLAAIVSEGEIDEMLDETTVGA) (cleaved by FlvT). The segment at residues 36–40 (STLPC) is a cross-link (lanthionine (Ser-Cys); by FlvM2). 2,3-didehydrobutyrine; by FlvM2 is present on residues threonine 37, threonine 46, and threonine 48. 3 consecutive cross-links (beta-methyllanthionine (Thr-Cys); by FlvM2) follow at residues 55–61 (TTGFDWC), 63–66 (TGAC), and 67–70 (THSC).

Contains LL-lanthionine and DL-beta-methyllanthionine, when coepressed in E.coli with the flavecin synthetase FlvM2.

It is found in the secreted. Its function is as follows. Lanthionine-containing peptide antibiotic (lantibiotic) that is probably weakly active on Gram-positive bacteria, since its analog [Del1]Flvbeta.g shows weak antibacterial activity against M.luteus. This activity is synergistically enhanced by [Del2]Flvalpha.a, an analog of Flvalpha.a, which is encoded by the same operon than Flvbeta.g. The bactericidal activity of lantibiotics is based on depolarization of energized bacterial cytoplasmic membranes, initiated by the formation of aqueous transmembrane pores. The protein is Lantibiotic Flvbeta.g of Ruminococcus flavefaciens.